The sequence spans 254 residues: MQYQVDTHTHTVASSHAYSTIHDYIAVAKQKGIRLFANTDHGPAMADAPHFWHFVNLRVLPRMVDGVGILRGIEANIKNIDGEIDFFGDYLKQLDIVLAGFHEPVYPPSDKATHTEAMINAIKSGKVDIITHPGNPAYPIDIEAVARAAAEYGVALEINNSSFEVSRKGSEANCTAIAKAAKEFGTILVMGSDSHVAFSLGGFARAQAIIDEVAYPPSRLLNRSPSALLAFLAARGHETVADLIPLFSDDEPCC.

The Zn(2+) site is built by H8, H10, H16, H41, E74, H102, H132, D193, and H195.

This sequence belongs to the PHP family. Zn(2+) is required as a cofactor.

This chain is Probable phosphatase Sbal223_2880, found in Shewanella baltica (strain OS223).